A 407-amino-acid polypeptide reads, in one-letter code: Methylenetetrahydrofolate--tRNA-(uracil-5-)-methyltransferase TrmFO (407 aa).

9-14 (GAGLAG) serves as a coordination point for FAD.

This sequence belongs to the MnmG family. TrmFO subfamily. FAD serves as cofactor.

The protein localises to the cytoplasm. It carries out the reaction uridine(54) in tRNA + (6R)-5,10-methylene-5,6,7,8-tetrahydrofolate + NADH + H(+) = 5-methyluridine(54) in tRNA + (6S)-5,6,7,8-tetrahydrofolate + NAD(+). The enzyme catalyses uridine(54) in tRNA + (6R)-5,10-methylene-5,6,7,8-tetrahydrofolate + NADPH + H(+) = 5-methyluridine(54) in tRNA + (6S)-5,6,7,8-tetrahydrofolate + NADP(+). In terms of biological role, catalyzes the folate-dependent formation of 5-methyl-uridine at position 54 (M-5-U54) in all tRNAs. This Lactobacillus helveticus (strain DPC 4571) protein is Methylenetetrahydrofolate--tRNA-(uracil-5-)-methyltransferase TrmFO.